The sequence spans 501 residues: NADH-quinone oxidoreductase subunit N (501 aa).

A run of 14 helical transmembrane segments spans residues 4–24 (HLPI…RLLV), 34–54 (FVLA…AETL), 80–100 (LAGG…VYAG), 112–132 (GSFY…CATG), 134–154 (LFNL…LIAF), 167–187 (LIIG…LYAM), 207–227 (PVVI…MALF), 241–261 (PAPV…YALY), 278–298 (LQVL…MAIA), 314–334 (VGYI…GALL), 335–355 (HVLS…GVSW), 376–396 (MGAF…LGFF), 409–429 (GAWV…VYFF), and 463–483 (PASM…LGLF).

This sequence belongs to the complex I subunit 2 family. As to quaternary structure, NDH-1 is composed of 14 different subunits. Subunits NuoA, H, J, K, L, M, N constitute the membrane sector of the complex.

It localises to the cell membrane. It catalyses the reaction a quinone + NADH + 5 H(+)(in) = a quinol + NAD(+) + 4 H(+)(out). In terms of biological role, NDH-1 shuttles electrons from NADH, via FMN and iron-sulfur (Fe-S) centers, to quinones in the respiratory chain. The immediate electron acceptor for the enzyme in this species is believed to be a menaquinone. Couples the redox reaction to proton translocation (for every two electrons transferred, four hydrogen ions are translocated across the cytoplasmic membrane), and thus conserves the redox energy in a proton gradient. The chain is NADH-quinone oxidoreductase subunit N from Desulforudis audaxviator (strain MP104C).